The chain runs to 715 residues: Dipeptidyl-peptidase 7 (715 aa).

A signal peptide spans 1–22 (MRKLIFSLVTSFFLLLPSVIRA). Catalysis depends on charge relay system residues His87, Asp223, and Ser650.

The protein belongs to the peptidase S46 family.

Its function is as follows. Catalyzes the removal of dipeptides from the N-terminus of oligopeptides. Most potently cleaves the synthetic substrate Met-Leu-methylcoumaryl-7-amide (Met-Leu-MCA), followed by Lys-Ala-, Leu-Arg- &gt; Leu-Asp-, Leu-Glu-, &gt;Leu-Lys, and &gt;Val-Arg-MCA, while this enzyme does not hydrolyze Gly-Arg-, Gly-Gly-, Lys-Lys-, or Gly-Pro-MCA. The sequence is that of Dipeptidyl-peptidase 7 (dpp7) from Capnocytophaga gingivalis.